A 324-amino-acid chain; its full sequence is NADH-ubiquinone oxidoreductase chain 1 (324 aa).

8 consecutive transmembrane segments (helical) span residues 3–23 (FILS…SVAF), 77–97 (ISPI…PFFV), 104–124 (LGGL…MVAG), 150–170 (LALI…IYFF), 174–194 (IYMW…TISL), 226–246 (LIFM…CVIF), 250–270 (DVFN…FIWA), and 297–317 (YLLF…WIFF).

It belongs to the complex I subunit 1 family.

The protein localises to the mitochondrion inner membrane. It carries out the reaction a ubiquinone + NADH + 5 H(+)(in) = a ubiquinol + NAD(+) + 4 H(+)(out). Functionally, core subunit of the mitochondrial membrane respiratory chain NADH dehydrogenase (Complex I) that is believed to belong to the minimal assembly required for catalysis. Complex I functions in the transfer of electrons from NADH to the respiratory chain. The immediate electron acceptor for the enzyme is believed to be ubiquinone. This chain is NADH-ubiquinone oxidoreductase chain 1 (mt:ND1), found in Drosophila yakuba (Fruit fly).